A 429-amino-acid chain; its full sequence is Saccharopine dehydrogenase-like oxidoreductase (429 aa).

Residue Ala-2 is modified to N-acetylalanine. Ser-217 is subject to Phosphoserine.

This sequence belongs to the saccharopine dehydrogenase family.

The sequence is that of Saccharopine dehydrogenase-like oxidoreductase (SCCPDH) from Bos taurus (Bovine).